A 274-amino-acid polypeptide reads, in one-letter code: Large ribosomal subunit protein uL2 (274 aa).

The disordered stretch occupies residues 224–274 (VMNPVDHPHGGGEGRSPIGRNPVTPWGKPALGARTRKKKPGDRLIVKRRAR). Over residues 257–274 (RTRKKKPGDRLIVKRRAR) the composition is skewed to basic residues.

Belongs to the universal ribosomal protein uL2 family. Part of the 50S ribosomal subunit. Forms a bridge to the 30S subunit in the 70S ribosome.

Functionally, one of the primary rRNA binding proteins. Required for association of the 30S and 50S subunits to form the 70S ribosome, for tRNA binding and peptide bond formation. It has been suggested to have peptidyltransferase activity; this is somewhat controversial. Makes several contacts with the 16S rRNA in the 70S ribosome. The protein is Large ribosomal subunit protein uL2 of Pelotomaculum thermopropionicum (strain DSM 13744 / JCM 10971 / SI).